The following is a 316-amino-acid chain: Melanocyte-stimulating hormone receptor (316 aa).

The Extracellular portion of the chain corresponds to 1–37 (MPMQGAQRKLLGSLNSTPTATSNLGLAANHTGAPCLE). Residue Asn29 is glycosylated (N-linked (GlcNAc...) asparagine). The chain crosses the membrane as a helical span at residues 38-63 (VSIPDGLFLSLGLVSLVENVLVVAAI). Over 64–72 (AKNRNLHSS) the chain is Cytoplasmic. The chain crosses the membrane as a helical span at residues 73–93 (MYCFICCLALSDLLVSGSNML). Residues 94-118 (ETAVILLLETGALATRTSVVQQLHN) lie on the Extracellular side of the membrane. Residues 119-140 (TINVLTCSSMLCSLCFLGAIAV) traverse the membrane as a helical segment. The Cytoplasmic portion of the chain corresponds to 141 to 163 (DRYISIFYALRYHSIMTLPRAQR). Residues 164–183 (AIAAIWVASVLSSTLFITYY) form a helical membrane-spanning segment. The Extracellular portion of the chain corresponds to 184–191 (DHAAVLLC). The helical transmembrane segment at 192–211 (LVVFFLAMLVLMAVLYVHML) threads the bilayer. Over 212 to 240 (ARACQHAHGIIRLHKRQTPAHQAFGLRGA) the chain is Cytoplasmic. The chain crosses the membrane as a helical span at residues 241–266 (ATLTILLGIFFLCWGPFFLHLTLVVF). Residues 267–279 (CPQHLTCSCIFKN) are Extracellular-facing. A helical membrane pass occupies residues 280–300 (FKVFLTLIICNTIIDPLIYAF). Residues 301–316 (RSQELRRTLKEVLCSW) are Cytoplasmic-facing. Cys314 carries S-palmitoyl cysteine lipidation.

Belongs to the G-protein coupled receptor 1 family. As to quaternary structure, interacts with MGRN1, but does not undergo MGRN1-mediated ubiquitination; this interaction competes with GNAS-binding and thus inhibits agonist-induced cAMP production. Interacts with OPN3; the interaction results in a decrease in MC1R-mediated cAMP signaling and ultimately a decrease in melanin production in melanocytes.

It is found in the cell membrane. Receptor for MSH (alpha, beta and gamma) and ACTH. The activity of this receptor is mediated by G proteins which activate adenylate cyclase. Mediates melanogenesis, the production of eumelanin (black/brown) and phaeomelanin (red/yellow), via regulation of cAMP signaling in melanocytes. The polypeptide is Melanocyte-stimulating hormone receptor (MC1R) (Saguinus geoffroyi (Geoffroy's tamarin)).